We begin with the raw amino-acid sequence, 256 residues long: Type III pantothenate kinase (256 aa).

An ATP-binding site is contributed by 6-13; it reads DVGNSNIV. Residues Tyr100 and 107 to 110 each bind substrate; that span reads GADR. Catalysis depends on Asp109, which acts as the Proton acceptor. K(+) is bound at residue Asp129. An ATP-binding site is contributed by Thr132. Thr184 is a binding site for substrate.

Belongs to the type III pantothenate kinase family. Homodimer. NH4(+) is required as a cofactor. It depends on K(+) as a cofactor.

Its subcellular location is the cytoplasm. It catalyses the reaction (R)-pantothenate + ATP = (R)-4'-phosphopantothenate + ADP + H(+). It participates in cofactor biosynthesis; coenzyme A biosynthesis; CoA from (R)-pantothenate: step 1/5. Catalyzes the phosphorylation of pantothenate (Pan), the first step in CoA biosynthesis. The sequence is that of Type III pantothenate kinase from Geotalea daltonii (strain DSM 22248 / JCM 15807 / FRC-32) (Geobacter daltonii).